We begin with the raw amino-acid sequence, 464 residues long: Light-independent protochlorophyllide reductase subunit N (464 aa).

3 residues coordinate [4Fe-4S] cluster: Cys29, Cys54, and Cys114.

Belongs to the BchN/ChlN family. Protochlorophyllide reductase is composed of three subunits; ChlL, ChlN and ChlB. Forms a heterotetramer of two ChlB and two ChlN subunits. It depends on [4Fe-4S] cluster as a cofactor.

It localises to the plastid. Its subcellular location is the chloroplast. The catalysed reaction is chlorophyllide a + oxidized 2[4Fe-4S]-[ferredoxin] + 2 ADP + 2 phosphate = protochlorophyllide a + reduced 2[4Fe-4S]-[ferredoxin] + 2 ATP + 2 H2O. It functions in the pathway porphyrin-containing compound metabolism; chlorophyll biosynthesis (light-independent). In terms of biological role, component of the dark-operative protochlorophyllide reductase (DPOR) that uses Mg-ATP and reduced ferredoxin to reduce ring D of protochlorophyllide (Pchlide) to form chlorophyllide a (Chlide). This reaction is light-independent. The NB-protein (ChlN-ChlB) is the catalytic component of the complex. The sequence is that of Light-independent protochlorophyllide reductase subunit N from Stigeoclonium helveticum (Green alga).